A 174-amino-acid chain; its full sequence is Ribosome maturation factor RimP (174 aa).

It belongs to the RimP family.

The protein resides in the cytoplasm. Functionally, required for maturation of 30S ribosomal subunits. In Acinetobacter baumannii (strain AB307-0294), this protein is Ribosome maturation factor RimP.